Consider the following 911-residue polypeptide: Isoleucine--tRNA ligase (911 aa).

The short motif at 57 to 67 (PYANGHIHIGH) is the 'HIGH' region element. Glu564 is an L-isoleucyl-5'-AMP binding site. Positions 605–609 (KMSKS) match the 'KMSKS' region motif. Lys608 serves as a coordination point for ATP. Cys887, Cys890, Cys902, and Cys905 together coordinate Zn(2+).

The protein belongs to the class-I aminoacyl-tRNA synthetase family. IleS type 1 subfamily. In terms of assembly, monomer. Zn(2+) is required as a cofactor.

The protein resides in the cytoplasm. The catalysed reaction is tRNA(Ile) + L-isoleucine + ATP = L-isoleucyl-tRNA(Ile) + AMP + diphosphate. Functionally, catalyzes the attachment of isoleucine to tRNA(Ile). As IleRS can inadvertently accommodate and process structurally similar amino acids such as valine, to avoid such errors it has two additional distinct tRNA(Ile)-dependent editing activities. One activity is designated as 'pretransfer' editing and involves the hydrolysis of activated Val-AMP. The other activity is designated 'posttransfer' editing and involves deacylation of mischarged Val-tRNA(Ile). This chain is Isoleucine--tRNA ligase, found in Nautilia profundicola (strain ATCC BAA-1463 / DSM 18972 / AmH).